The primary structure comprises 89 residues: Small ribosomal subunit protein uS15 (89 aa).

It belongs to the universal ribosomal protein uS15 family. As to quaternary structure, part of the 30S ribosomal subunit. Forms a bridge to the 50S subunit in the 70S ribosome, contacting the 23S rRNA.

One of the primary rRNA binding proteins, it binds directly to 16S rRNA where it helps nucleate assembly of the platform of the 30S subunit by binding and bridging several RNA helices of the 16S rRNA. Its function is as follows. Forms an intersubunit bridge (bridge B4) with the 23S rRNA of the 50S subunit in the ribosome. The chain is Small ribosomal subunit protein uS15 from Chloroflexus aurantiacus (strain ATCC 29366 / DSM 635 / J-10-fl).